The chain runs to 464 residues: tRNA modification GTPase MnmE (464 aa).

(6S)-5-formyl-5,6,7,8-tetrahydrofolate contacts are provided by R28, E90, and R129. The TrmE-type G domain occupies 226-385 (GLATAIVGRP…LEEKIAELFF (160 aa)). N236 is a binding site for K(+). Residues 236–241 (NVGKSS), 255–261 (TDIAGTT), and 280–283 (DTAG) each bind GTP. S240 contributes to the Mg(2+) binding site. Positions 255, 257, and 260 each coordinate K(+). Residue T261 participates in Mg(2+) binding. (6S)-5-formyl-5,6,7,8-tetrahydrofolate is bound at residue K464.

It belongs to the TRAFAC class TrmE-Era-EngA-EngB-Septin-like GTPase superfamily. TrmE GTPase family. As to quaternary structure, homodimer. Heterotetramer of two MnmE and two MnmG subunits. The cofactor is K(+).

The protein resides in the cytoplasm. Functionally, exhibits a very high intrinsic GTPase hydrolysis rate. Involved in the addition of a carboxymethylaminomethyl (cmnm) group at the wobble position (U34) of certain tRNAs, forming tRNA-cmnm(5)s(2)U34. The polypeptide is tRNA modification GTPase MnmE (Ligilactobacillus salivarius (strain UCC118) (Lactobacillus salivarius)).